We begin with the raw amino-acid sequence, 112 residues long: Large ribosomal subunit protein mL53 (112 aa).

Belongs to the mitochondrion-specific ribosomal protein mL53 family. In terms of assembly, component of the mitochondrial ribosome large subunit (39S) which comprises a 16S rRNA and about 50 distinct proteins.

It is found in the mitochondrion. The polypeptide is Large ribosomal subunit protein mL53 (MRPL53) (Pongo abelii (Sumatran orangutan)).